We begin with the raw amino-acid sequence, 37 residues long: Hemextin A (37 aa).

Heterotetramer composed of two A and two B chains; non-covalently linked. Does not exist as a complex in the crude venom. In terms of processing, may contain several disulfide bonds. Expressed by the venom gland.

It localises to the secreted. In terms of biological role, hemextin A (monomer): exhibits mild anticoagulant activity. It specifically inhibits the activation of FX (F10) by the TF-FVIIa complex (extrinsic tenase complex (ETC)) by non-competitively inhibiting the enzymatic activity of FVIIa. Hemextin AB complex: specifically inhibits the activation of FX (F10) by the TF-FVIIa complex (extrinsic tenase complex (ETC)) (IC(50)= 100 nM, Ki=25 nM) by non-competitively inhibiting the enzymatic activity of FVIIa. The protein is Hemextin A of Hemachatus haemachatus (Rinkhals).